A 213-amino-acid polypeptide reads, in one-letter code: Endonuclease III (213 aa).

One can recognise a HhH domain in the interval 108–127 (FKELIKLPGVGRKTANVVLN). Residues Cys187, Cys194, Cys197, and Cys203 each coordinate [4Fe-4S] cluster.

It belongs to the Nth/MutY family. The cofactor is [4Fe-4S] cluster.

It catalyses the reaction 2'-deoxyribonucleotide-(2'-deoxyribose 5'-phosphate)-2'-deoxyribonucleotide-DNA = a 3'-end 2'-deoxyribonucleotide-(2,3-dehydro-2,3-deoxyribose 5'-phosphate)-DNA + a 5'-end 5'-phospho-2'-deoxyribonucleoside-DNA + H(+). In terms of biological role, DNA repair enzyme that has both DNA N-glycosylase activity and AP-lyase activity. The DNA N-glycosylase activity releases various damaged pyrimidines from DNA by cleaving the N-glycosidic bond, leaving an AP (apurinic/apyrimidinic) site. The AP-lyase activity cleaves the phosphodiester bond 3' to the AP site by a beta-elimination, leaving a 3'-terminal unsaturated sugar and a product with a terminal 5'-phosphate. The chain is Endonuclease III from Rickettsia felis (strain ATCC VR-1525 / URRWXCal2) (Rickettsia azadi).